A 283-amino-acid polypeptide reads, in one-letter code: 2-dehydro-3-deoxyphosphooctonate aldolase (283 aa).

It belongs to the KdsA family.

Its subcellular location is the cytoplasm. The catalysed reaction is D-arabinose 5-phosphate + phosphoenolpyruvate + H2O = 3-deoxy-alpha-D-manno-2-octulosonate-8-phosphate + phosphate. The protein operates within carbohydrate biosynthesis; 3-deoxy-D-manno-octulosonate biosynthesis; 3-deoxy-D-manno-octulosonate from D-ribulose 5-phosphate: step 2/3. It functions in the pathway bacterial outer membrane biogenesis; lipopolysaccharide biosynthesis. The protein is 2-dehydro-3-deoxyphosphooctonate aldolase of Synechococcus sp. (strain WH7803).